The primary structure comprises 570 residues: Proline--tRNA ligase (570 aa).

The protein belongs to the class-II aminoacyl-tRNA synthetase family. ProS type 1 subfamily. Homodimer.

The protein resides in the cytoplasm. It carries out the reaction tRNA(Pro) + L-proline + ATP = L-prolyl-tRNA(Pro) + AMP + diphosphate. Its function is as follows. Catalyzes the attachment of proline to tRNA(Pro) in a two-step reaction: proline is first activated by ATP to form Pro-AMP and then transferred to the acceptor end of tRNA(Pro). As ProRS can inadvertently accommodate and process non-cognate amino acids such as alanine and cysteine, to avoid such errors it has two additional distinct editing activities against alanine. One activity is designated as 'pretransfer' editing and involves the tRNA(Pro)-independent hydrolysis of activated Ala-AMP. The other activity is designated 'posttransfer' editing and involves deacylation of mischarged Ala-tRNA(Pro). The misacylated Cys-tRNA(Pro) is not edited by ProRS. The sequence is that of Proline--tRNA ligase from Shewanella sp. (strain MR-7).